The chain runs to 252 residues: 5'-nucleotidase SurE (252 aa).

The a divalent metal cation site is built by Asp8, Asp9, Ser39, and Asn91.

The protein belongs to the SurE nucleotidase family. Requires a divalent metal cation as cofactor.

The protein resides in the cytoplasm. The catalysed reaction is a ribonucleoside 5'-phosphate + H2O = a ribonucleoside + phosphate. Functionally, nucleotidase that shows phosphatase activity on nucleoside 5'-monophosphates. The polypeptide is 5'-nucleotidase SurE (Gemmatimonas aurantiaca (strain DSM 14586 / JCM 11422 / NBRC 100505 / T-27)).